The sequence spans 41 residues: Competence-stimulating peptide type 1 (41 aa).

Positions Met-1 to Gly-24 are excised as a propeptide.

The protein belongs to the ComC family.

Its subcellular location is the secreted. Its function is as follows. Acts as a pheromone, induces cells to develop competence for genetic transformation. The chain is Competence-stimulating peptide type 1 (comC1) from Streptococcus pneumoniae.